The primary structure comprises 237 residues: Demethylmenaquinone methyltransferase (237 aa).

S-adenosyl-L-methionine is bound by residues Thr58, Asp79, and 106 to 107 (NA).

This sequence belongs to the class I-like SAM-binding methyltransferase superfamily. MenG/UbiE family.

It carries out the reaction a 2-demethylmenaquinol + S-adenosyl-L-methionine = a menaquinol + S-adenosyl-L-homocysteine + H(+). Its pathway is quinol/quinone metabolism; menaquinone biosynthesis; menaquinol from 1,4-dihydroxy-2-naphthoate: step 2/2. In terms of biological role, methyltransferase required for the conversion of demethylmenaquinol (DMKH2) to menaquinol (MKH2). The sequence is that of Demethylmenaquinone methyltransferase from Listeria monocytogenes serotype 4a (strain HCC23).